A 293-amino-acid chain; its full sequence is Nitrogenase iron protein (293 aa).

An ATP-binding site is contributed by 10–17; it reads GKGGIGKS. Residue cysteine 98 participates in [4Fe-4S] cluster binding. Residue arginine 101 is modified to ADP-ribosylarginine; by dinitrogenase reductase ADP-ribosyltransferase. A [4Fe-4S] cluster-binding site is contributed by cysteine 133.

It belongs to the NifH/BchL/ChlL family. In terms of assembly, homodimer. The cofactor is [4Fe-4S] cluster. The reversible ADP-ribosylation of Arg-101 inactivates the nitrogenase reductase and regulates nitrogenase activity.

It carries out the reaction N2 + 8 reduced [2Fe-2S]-[ferredoxin] + 16 ATP + 16 H2O = H2 + 8 oxidized [2Fe-2S]-[ferredoxin] + 2 NH4(+) + 16 ADP + 16 phosphate + 6 H(+). Functionally, the key enzymatic reactions in nitrogen fixation are catalyzed by the nitrogenase complex, which has 2 components: the iron protein and the molybdenum-iron protein. The sequence is that of Nitrogenase iron protein from Klebsiella pneumoniae (strain 342).